Consider the following 93-residue polypeptide: Large ribosomal subunit protein uL23cz/uL23cy (93 aa).

The protein belongs to the universal ribosomal protein uL23 family. In terms of assembly, part of the 50S ribosomal subunit.

The protein localises to the plastid. Its subcellular location is the chloroplast. In terms of biological role, binds to 23S rRNA. The chain is Large ribosomal subunit protein uL23cz/uL23cy (rpl23-A) from Piper cenocladum (Ant piper).